Reading from the N-terminus, the 256-residue chain is uncharacterized protein (256 aa).

A disordered region spans residues 1-23; it reads MIPPCENAPHIIYHESQRGTRDR. Positions 12–23 are enriched in basic and acidic residues; that stretch reads IYHESQRGTRDR.

This is an uncharacterized protein from Homo sapiens (Human).